A 219-amino-acid polypeptide reads, in one-letter code: Large ribosomal subunit protein uL16 (219 aa).

This sequence belongs to the universal ribosomal protein uL16 family. In terms of assembly, component of the small ribosomal subunit. Mature ribosomes consist of a small (40S) and a large (60S) subunit. The 40S subunit contains about 33 different proteins and 1 molecule of RNA (18S). The 60S subunit contains about 49 different proteins and 3 molecules of RNA (25S, 5.8S and 5S).

This Encephalitozoon cuniculi (strain GB-M1) (Microsporidian parasite) protein is Large ribosomal subunit protein uL16 (RPL10).